The following is a 232-amino-acid chain: F420-dependent NADP reductase (232 aa).

NADP(+) contacts are provided by residues 15–18 (TGDQ), 37–38 (SR), lysine 42, valine 80, valine 106, and alanine 151.

It belongs to the F420-dependent NADP reductase family. As to quaternary structure, homotetramer.

It carries out the reaction reduced coenzyme F420-(gamma-L-Glu)(n) + NADP(+) = oxidized coenzyme F420-(gamma-L-Glu)(n) + NADPH + 2 H(+). Its function is as follows. Catalyzes the reduction of NADP(+) with F420H(2) via hydride transfer, and likely the reverse reaction, i.e. the reduction of F420 with NADPH. Probably functions in the regeneration of NADPH required in biosynthetic reactions. Is specific for reduced F420 as electron donor for the reduction of NADP; neither reduced FAD nor FMN can act as electron donor. The enzyme is also specific for NADP; NAD is not utilized as substrate. The protein is F420-dependent NADP reductase (fno) of Methanothermobacter thermautotrophicus (strain ATCC 29096 / DSM 1053 / JCM 10044 / NBRC 100330 / Delta H) (Methanobacterium thermoautotrophicum).